The following is a 140-amino-acid chain: Coiled-coil domain-containing protein 126 (140 aa).

Positions 1–26 are cleaved as a signal peptide; it reads MFFTISRKNMSQKLSLLLLVFGLIWG. 2 N-linked (GlcNAc...) asparagine glycosylation sites follow: Asn-110 and Asn-134. Residues 120–140 form a disordered region; that stretch reads TSGNLVPVTTNKRTNVSGSIR.

It is found in the secreted. In Homo sapiens (Human), this protein is Coiled-coil domain-containing protein 126 (CCDC126).